Here is a 675-residue protein sequence, read N- to C-terminus: E3 ubiquitin-protein ligase COP1 (675 aa).

The disordered stretch occupies residues Met1–Glu40. Positions 52, 55, 67, 69, 72, 75, 86, and 89 each coordinate Zn(2+). An RING-type zinc finger spans residues Cys52–Ser90. The interval Cys67–Gln177 is CLS (cytoplasmic localization signal). Residues Ala120–Gln177 form an SNLS (subnuclear localization signal) region. Residues Cys134–Arg201 are a coiled coil. Residues Glu261–Val290 are disordered. The span at Gly279–Val290 shows a compositional bias: polar residues. Residues Arg294–Ala317 carry the Bipartite nuclear localization signal motif. WD repeat units lie at residues His369 to Ala408, Ser418 to Glu458, Glu461 to Asn501, Asp503 to His543, Gly547 to Thr585, Gly588 to Ser627, and Ala642 to Ala675. Residues Lys593–Phe595 form a binding of human TRIB1 COP1-binding-motif region.

As to quaternary structure, homodimer. Interacts with HY5, HYH, BBX24/STO, BBX25/STH, CIP8, COP10, SPA1, SPA2, SPA3, SPA4 and UVR8 and phosphorylated PHYA. Light induces dissociation of the SPA1/COP1 complex. Interacts with HRT/RPP8 and triggers it to the 26s proteasome. Binds to CRY2; this competitive interaction prevents triggering to proteasome of other binding proteins. Binds to SHW1 in the nucleus. Bonds to CIP7. Interacts with CSU2. Binds to CIP1. Interacts directly with DHU1. Associates to UNE10/PIF8. Binds directly to PCH1 and PCHL. Autoubiquitinated.

It localises to the nucleus. The protein resides in the cytoplasm. It catalyses the reaction S-ubiquitinyl-[E2 ubiquitin-conjugating enzyme]-L-cysteine + [acceptor protein]-L-lysine = [E2 ubiquitin-conjugating enzyme]-L-cysteine + N(6)-ubiquitinyl-[acceptor protein]-L-lysine.. Its pathway is protein modification; protein ubiquitination. In terms of biological role, E3 ubiquitin-protein ligase that acts as a repressor of photomorphogenesis and as an activator of etiolation in darkness. E3 ubiquitin ligases accept ubiquitin from an E2 ubiquitin-conjugating enzyme in the form of a thioester and then directly transfers the ubiquitin to targeted substrates. Represses photomorphogenesis in darkness by mediating ubiquitination and subsequent proteasomal degradation of light-induced transcription factors such as HY5, HYH and LAF1. Down-regulates MYB21, probably via ubiquitination process. Light stimuli abrogate the repression of photomorphogenesis, possibly due to its localization to the cytoplasm. Could play a role in switching between skotomorphogenetic and photomorphogenetic pathways. Mediates the ubiquitination-dependent degradation of HY5 in the darkness during seedling development (e.g. hypocotyl growth). Represses CIP7 in darkness. Triggers ubiquitination and subsequent protein degradation of UNE10/PIF8, PCH1 and PCHL in the dark. This is E3 ubiquitin-protein ligase COP1 from Arabidopsis thaliana (Mouse-ear cress).